The chain runs to 82 residues: Musculoskeletal embryonic nuclear protein 1 (82 aa).

Positions 1–34 (MSQAGAQEAPIKKKRPPVKEEDLKGARGNLTKNQ) are disordered. At S2 the chain carries Phosphoserine. The Nuclear localization signal motif lies at 10 to 18 (PIKKKRPPV).

Belongs to the MUSTN1 family.

The protein localises to the nucleus. The protein resides in the cytoplasm. It localises to the secreted. Its subcellular location is the extracellular space. Required for chondrocyte development and proliferation. Plays a role in myoblast differentiation and fusion. Modulates skeletal muscle extracellular matrix composition. Plays a role in skeletal muscle function. Plays a role in glucose homeostasis. This chain is Musculoskeletal embryonic nuclear protein 1 (MUSTN1), found in Bos taurus (Bovine).